The primary structure comprises 241 residues: 1-(5-phosphoribosyl)-5-[(5-phosphoribosylamino)methylideneamino] imidazole-4-carboxamide isomerase (241 aa).

Catalysis depends on aspartate 8, which acts as the Proton acceptor. The Proton donor role is filled by aspartate 130.

This sequence belongs to the HisA/HisF family.

Its subcellular location is the cytoplasm. It carries out the reaction 1-(5-phospho-beta-D-ribosyl)-5-[(5-phospho-beta-D-ribosylamino)methylideneamino]imidazole-4-carboxamide = 5-[(5-phospho-1-deoxy-D-ribulos-1-ylimino)methylamino]-1-(5-phospho-beta-D-ribosyl)imidazole-4-carboxamide. Its pathway is amino-acid biosynthesis; L-histidine biosynthesis; L-histidine from 5-phospho-alpha-D-ribose 1-diphosphate: step 4/9. The protein is 1-(5-phosphoribosyl)-5-[(5-phosphoribosylamino)methylideneamino] imidazole-4-carboxamide isomerase of Flavobacterium psychrophilum (strain ATCC 49511 / DSM 21280 / CIP 103535 / JIP02/86).